Consider the following 394-residue polypeptide: Mannosyl-3-phosphoglycerate synthase (394 aa).

Belongs to the glycosyltransferase 2 family.

The protein localises to the cytoplasm. The enzyme catalyses (2R)-3-phosphoglycerate + GDP-alpha-D-mannose = 2-O-(alpha-D-mannosyl)-3-phosphoglycerate + GDP + H(+). The protein operates within carbohydrate biosynthesis; 2-(alpha-D-mannosyl)-D-glycerate biosynthesis; 2-(alpha-D-mannosyl)-D-glycerate from GDP-alpha-D-mannose (MPG route): step 1/2. Its function is as follows. Transfers a mannosyl group from GDP-mannose to phosphoglycerate to form mannosyl-3-phosphoglycerate (MPG). This Pyrococcus abyssi (strain GE5 / Orsay) protein is Mannosyl-3-phosphoglycerate synthase (mngA).